The primary structure comprises 108 residues: UPF0060 membrane protein RSKD131_0092 (108 aa).

Helical transmembrane passes span 5–25 (LAAY…VWAW), 32–52 (ALWL…LALT), 62–82 (AVYG…VEGV), and 86–106 (RWDM…LWAP).

It belongs to the UPF0060 family.

It localises to the cell inner membrane. This Cereibacter sphaeroides (strain KD131 / KCTC 12085) (Rhodobacter sphaeroides) protein is UPF0060 membrane protein RSKD131_0092.